The following is a 571-amino-acid chain: MRVSKYLLSTQKETPANAEVISHQLMLRAGMIRRNASGLYSYLPTGLRVLRKVEAIVREEMNKAGAIEILMPMVQPADLWVETGRWEKFGPELLRFKDRHNRDFVLGPTHEEVITDLIRKEVSSYKQLPLNLYQIQTKFRDEVRPRFGMMRSREFLMKDAYSFHLDVDTMNETYEAMYNAYSNILTRMGLAFRPVLADTGSIGGSMSHEFHVLAQSGEDLIAYSTGSDYAANIEKAESPVPTEPRGAATEELRLVDTPNAKTIAELVEQFDLDITKTVKTLIVVGASEATPLVALIVRGDHELNEVKADKLDLVASPVEMAPEALIRDAIGAGPGSLGPIGLNIPIVIDHSVSVMSDFAAGANVDDKHYFGINWERDLPTAQVADIRNVVEGEPTPDGSGTYAMARGIEVGHIFQLGTNYSKSMNATVLDENGKSQVLLMGCYGVGVSRIVAAAIEQNFDDRGIIWPEAIAPFSVGILPMNMHKSHRVTDIAEQLYKDLNEAGIDVLLDDRKERPGVMFADMELIGIPHTVVIGDRNIDAGVFEYKNRRTGEKQDIPFDQLLDLLKNAVKG.

The protein belongs to the class-II aminoacyl-tRNA synthetase family. ProS type 1 subfamily. Homodimer.

It is found in the cytoplasm. It catalyses the reaction tRNA(Pro) + L-proline + ATP = L-prolyl-tRNA(Pro) + AMP + diphosphate. In terms of biological role, catalyzes the attachment of proline to tRNA(Pro) in a two-step reaction: proline is first activated by ATP to form Pro-AMP and then transferred to the acceptor end of tRNA(Pro). As ProRS can inadvertently accommodate and process non-cognate amino acids such as alanine and cysteine, to avoid such errors it has two additional distinct editing activities against alanine. One activity is designated as 'pretransfer' editing and involves the tRNA(Pro)-independent hydrolysis of activated Ala-AMP. The other activity is designated 'posttransfer' editing and involves deacylation of mischarged Ala-tRNA(Pro). The misacylated Cys-tRNA(Pro) is not edited by ProRS. This Shewanella baltica (strain OS155 / ATCC BAA-1091) protein is Proline--tRNA ligase.